The primary structure comprises 342 residues: Biotin synthase (342 aa).

In terms of domain architecture, Radical SAM core spans 63–288; the sequence is PEVEVEGIIS…RTMLRFAGGR (226 aa). Positions 78, 82, and 85 each coordinate [4Fe-4S] cluster. Cysteine 121, cysteine 154, cysteine 213, and arginine 283 together coordinate [2Fe-2S] cluster.

It belongs to the radical SAM superfamily. Biotin synthase family. Homodimer. Requires [4Fe-4S] cluster as cofactor. [2Fe-2S] cluster is required as a cofactor.

The enzyme catalyses (4R,5S)-dethiobiotin + (sulfur carrier)-SH + 2 reduced [2Fe-2S]-[ferredoxin] + 2 S-adenosyl-L-methionine = (sulfur carrier)-H + biotin + 2 5'-deoxyadenosine + 2 L-methionine + 2 oxidized [2Fe-2S]-[ferredoxin]. The protein operates within cofactor biosynthesis; biotin biosynthesis; biotin from 7,8-diaminononanoate: step 2/2. Its function is as follows. Catalyzes the conversion of dethiobiotin (DTB) to biotin by the insertion of a sulfur atom into dethiobiotin via a radical-based mechanism. The protein is Biotin synthase of Mycobacteroides abscessus (strain ATCC 19977 / DSM 44196 / CCUG 20993 / CIP 104536 / JCM 13569 / NCTC 13031 / TMC 1543 / L948) (Mycobacterium abscessus).